The chain runs to 660 residues: Acetyl-coenzyme A synthetase (660 aa).

CoA-binding positions include 197-200 (RGGK) and threonine 317. Residues 397–399 (GEP), 421–426 (DTWWQT), aspartate 512, and arginine 528 each bind ATP. Residue serine 536 coordinates CoA. Arginine 539 is an ATP binding site. Valine 550, histidine 552, and valine 555 together coordinate Mg(2+). An N6-acetyllysine modification is found at lysine 625.

The protein belongs to the ATP-dependent AMP-binding enzyme family. It depends on Mg(2+) as a cofactor. Post-translationally, acetylated. Deacetylation by the SIR2-homolog deacetylase activates the enzyme.

It carries out the reaction acetate + ATP + CoA = acetyl-CoA + AMP + diphosphate. Its function is as follows. Catalyzes the conversion of acetate into acetyl-CoA (AcCoA), an essential intermediate at the junction of anabolic and catabolic pathways. AcsA undergoes a two-step reaction. In the first half reaction, AcsA combines acetate with ATP to form acetyl-adenylate (AcAMP) intermediate. In the second half reaction, it can then transfer the acetyl group from AcAMP to the sulfhydryl group of CoA, forming the product AcCoA. The chain is Acetyl-coenzyme A synthetase from Burkholderia mallei (strain NCTC 10247).